We begin with the raw amino-acid sequence, 241 residues long: Deoxyribose-phosphate aldolase (241 aa).

Aspartate 95 acts as the Proton donor/acceptor in catalysis. The Schiff-base intermediate with acetaldehyde role is filled by lysine 159. The active-site Proton donor/acceptor is the lysine 188.

Belongs to the DeoC/FbaB aldolase family. DeoC type 1 subfamily.

The protein resides in the cytoplasm. It carries out the reaction 2-deoxy-D-ribose 5-phosphate = D-glyceraldehyde 3-phosphate + acetaldehyde. The protein operates within carbohydrate degradation; 2-deoxy-D-ribose 1-phosphate degradation; D-glyceraldehyde 3-phosphate and acetaldehyde from 2-deoxy-alpha-D-ribose 1-phosphate: step 2/2. In terms of biological role, catalyzes a reversible aldol reaction between acetaldehyde and D-glyceraldehyde 3-phosphate to generate 2-deoxy-D-ribose 5-phosphate. The sequence is that of Deoxyribose-phosphate aldolase from Rhodopirellula baltica (strain DSM 10527 / NCIMB 13988 / SH1).